A 124-amino-acid polypeptide reads, in one-letter code: Kinocilin (124 aa).

A run of 2 helical transmembrane segments spans residues 13-33 (LQLA…GVSV) and 40-60 (VGGI…YPFL). A disordered region spans residues 80–124 (PNSGPDHGEGRSSNNSNKEGARSGLSTVTRTLEKLKPGGRGTEEG). Residues 90–109 (RSSNNSNKEGARSGLSTVTR) are compositionally biased toward polar residues. The segment covering 110 to 124 (TLEKLKPGGRGTEEG) has biased composition (basic and acidic residues).

Preferentially expressed in the inner ear and testis. Localizes mainly in the kinocilium of sensory cells in the inner ear. Also present in the manchette of the spermatids, a transient structure enriched in interconnected microtubules (at protein level).

It is found in the membrane. Functionally, may play a role in stabilizing dense microtubular networks or in vesicular trafficking. This chain is Kinocilin (Kncn), found in Mus musculus (Mouse).